A 243-amino-acid chain; its full sequence is Pyridoxine 5'-phosphate synthase (243 aa).

Asn-9 is a 3-amino-2-oxopropyl phosphate binding site. 11–12 (DH) contributes to the 1-deoxy-D-xylulose 5-phosphate binding site. Arg-20 contributes to the 3-amino-2-oxopropyl phosphate binding site. Catalysis depends on His-45, which acts as the Proton acceptor. 1-deoxy-D-xylulose 5-phosphate-binding residues include Arg-47 and His-52. Glu-72 acts as the Proton acceptor in catalysis. Thr-102 lines the 1-deoxy-D-xylulose 5-phosphate pocket. The Proton donor role is filled by His-193. Residues Gly-194 and 215–216 (GH) contribute to the 3-amino-2-oxopropyl phosphate site.

Belongs to the PNP synthase family. As to quaternary structure, homooctamer; tetramer of dimers.

It localises to the cytoplasm. The enzyme catalyses 3-amino-2-oxopropyl phosphate + 1-deoxy-D-xylulose 5-phosphate = pyridoxine 5'-phosphate + phosphate + 2 H2O + H(+). It participates in cofactor biosynthesis; pyridoxine 5'-phosphate biosynthesis; pyridoxine 5'-phosphate from D-erythrose 4-phosphate: step 5/5. In terms of biological role, catalyzes the complicated ring closure reaction between the two acyclic compounds 1-deoxy-D-xylulose-5-phosphate (DXP) and 3-amino-2-oxopropyl phosphate (1-amino-acetone-3-phosphate or AAP) to form pyridoxine 5'-phosphate (PNP) and inorganic phosphate. This is Pyridoxine 5'-phosphate synthase from Shigella boydii serotype 4 (strain Sb227).